The chain runs to 360 residues: GTPase Obg (360 aa).

The Obg domain maps to 1-156 (MFVDSVEIII…KCVRLELKLI (156 aa)). The 204-residue stretch at 157–360 (ADIGLVGFPN…LKFVLLEALP (204 aa)) folds into the OBG-type G domain. Residues 163–170 (GFPNAGKS), 188–192 (FTTLV), 210–213 (DIPG), 279–282 (NKCD), and 341–343 (SAV) each bind GTP. Residues serine 170 and threonine 190 each coordinate Mg(2+).

This sequence belongs to the TRAFAC class OBG-HflX-like GTPase superfamily. OBG GTPase family. As to quaternary structure, monomer. It depends on Mg(2+) as a cofactor.

The protein localises to the cytoplasm. In terms of biological role, an essential GTPase which binds GTP, GDP and possibly (p)ppGpp with moderate affinity, with high nucleotide exchange rates and a fairly low GTP hydrolysis rate. Plays a role in control of the cell cycle, stress response, ribosome biogenesis and in those bacteria that undergo differentiation, in morphogenesis control. The polypeptide is GTPase Obg (Helicobacter acinonychis (strain Sheeba)).